The following is a 212-amino-acid chain: Tubulin alpha chain (212 aa).

2 residues coordinate GTP: Asn3 and Asn25. The active site involves Glu51.

Belongs to the tubulin family. As to quaternary structure, dimer of alpha and beta chains. A typical microtubule is a hollow water-filled tube with an outer diameter of 25 nm and an inner diameter of 15 nM. Alpha-beta heterodimers associate head-to-tail to form protofilaments running lengthwise along the microtubule wall with the beta-tubulin subunit facing the microtubule plus end conferring a structural polarity. Microtubules usually have 13 protofilaments but different protofilament numbers can be found in some organisms and specialized cells. Requires Mg(2+) as cofactor.

The protein resides in the cytoplasm. The protein localises to the cytoskeleton. The enzyme catalyses GTP + H2O = GDP + phosphate + H(+). In terms of biological role, tubulin is the major constituent of microtubules, a cylinder consisting of laterally associated linear protofilaments composed of alpha- and beta-tubulin heterodimers. Microtubules grow by the addition of GTP-tubulin dimers to the microtubule end, where a stabilizing cap forms. Below the cap, tubulin dimers are in GDP-bound state, owing to GTPase activity of alpha-tubulin. The sequence is that of Tubulin alpha chain (TUB-A) from Pneumocystis carinii.